The primary structure comprises 384 residues: Surfeit locus protein 1-like (384 aa).

3 helical membrane passes run 55–75 (ALLW…YKFL), 302–322 (IPLD…TCFI), and 338–358 (IGVE…TKIY).

It belongs to the SURF1 (TC 3.D.4.8) family.

It is found in the mitochondrion inner membrane. Functionally, may be involved in the biogenesis of the COX complex. This is Surfeit locus protein 1-like from Arabidopsis thaliana (Mouse-ear cress).